A 430-amino-acid polypeptide reads, in one-letter code: BSD domain-containing protein 1 (430 aa).

Phosphoserine occurs at positions 92 and 166. The BSD domain maps to 146 to 198 (WLSQFCLEEKKGEISELLVGSPSIRALYTKMVPAAVSHSEFWHRYFYKVHQLE). Disordered regions lie at residues 247–298 (STFP…APEA) and 319–398 (LAVD…WEKD). Residues 276–291 (PSESSESISLVTQIAN) show a composition bias toward polar residues. Basic and acidic residues predominate over residues 350 to 367 (PPARVETLREEAPTDLRV). Thr356 bears the Phosphothreonine mark. Residues 371-390 (NSDSGKSTPSNNGKKGSSTD) show a composition bias toward polar residues. 3 positions are modified to phosphoserine: Ser387, Ser388, and Ser418.

This Homo sapiens (Human) protein is BSD domain-containing protein 1 (BSDC1).